The following is a 297-amino-acid chain: Protein LRATD1 (297 aa).

Phosphoserine is present on serine 38. In terms of domain architecture, LRAT spans 138 to 233 (PAPEPPAPAP…CRFGKREFKA (96 aa)).

This sequence belongs to the LRATD family.

It is found in the cytoplasm. Functionally, may play a role in cell morphology and motility. This chain is Protein LRATD1 (LRATD1), found in Bos taurus (Bovine).